The sequence spans 572 residues: Triacylglycerol lipase OBL1 (572 aa).

The helical transmembrane segment at 110-130 (GYLVEFFLNLFSLNGNFLGLL) threads the bilayer. The disordered stretch occupies residues 320–356 (IPPSESSKSSTSFSDSDAHTGSDLSSDSERPTDTRKK). Residues 323–334 (SESSKSSTSFSD) are compositionally biased toward low complexity. Residues 346–356 (DSERPTDTRKK) are compositionally biased toward basic and acidic residues. The GXSXG signature appears at 391–395 (GHSLG). The active-site Nucleophile is Ser-393. Catalysis depends on charge relay system residues Asp-457 and His-550.

The protein belongs to the AB hydrolase superfamily. Lipase family. In terms of tissue distribution, expressed in pollen grains and pollen tubes.

The protein localises to the lipid droplet. The protein resides in the membrane. The catalysed reaction is 1,2-di-(9Z-octadecenoyl)-glycerol + (9Z)-octadecenoate + H(+) = 1,2,3-tri-(9Z-octadecenoyl)-glycerol + H2O. The enzyme catalyses 1-(9Z-octadecenoyl)-glycerol + H2O = glycerol + (9Z)-octadecenoate + H(+). In terms of biological role, acid lipase that can hydrolyze a range of triacylglycerols without a clear preference for acyl-chains. Can also cleave 1,2-diacylglycerol, 1,3-diacylglycerol and 1-monoacylglycerol, but not phosphatidylcholine, phosphatidylethanolamine, or sterol esters. Required for pollen tube growth. Triacylglycerol hydrolysis by OBL1 may provide acyl groups for the synthesis of membrane lipids in growing pollen tubes. The protein is Triacylglycerol lipase OBL1 of Nicotiana tabacum (Common tobacco).